The following is a 272-amino-acid chain: 2-amino-3,7-dideoxy-D-threo-hept-6-ulosonate synthase (272 aa).

Catalysis depends on Asp-33, which acts as the Proton acceptor. 1-deoxy-D-threo-hexo-2,5-diulose 6-phosphate-binding positions include 33 to 37 (DHGVS) and 153 to 155 (YPR). The active-site Proton donor is the Tyr-153. Lys-184 acts as the Schiff-base intermediate with substrate in catalysis. 1-deoxy-D-threo-hexo-2,5-diulose 6-phosphate-binding positions include 209 to 210 (GG) and 237 to 238 (GR).

It belongs to the DeoC/FbaB aldolase family. ADHS subfamily. As to quaternary structure, homodecamer.

The enzyme catalyses 1-deoxy-D-threo-hexo-2,5-diulose 6-phosphate + L-aspartate 4-semialdehyde = 2,3-dioxopropyl phosphate + 2-amino-2,3,7-trideoxy-D-lyxo-hept-6-ulosonate. Functionally, catalyzes a transaldol reaction between 6-deoxy-5-ketofructose 1-phosphate (DKFP) and L-aspartate semialdehyde (ASA) with an elimination of hydroxypyruvaldehyde phosphate to yield 2-amino-3,7-dideoxy-D-threo-hept-6-ulosonate (ADH). Plays a key role in an alternative pathway of the biosynthesis of 3-dehydroquinate (DHQ), which is involved in the canonical pathway for the biosynthesis of aromatic amino acids. This is 2-amino-3,7-dideoxy-D-threo-hept-6-ulosonate synthase from Methanococcus maripaludis (strain C7 / ATCC BAA-1331).